The sequence spans 703 residues: Lethal(3)malignant brain tumor-like protein 2 (703 aa).

Residues 1-85 (MEKPRGTEEA…NNRSLDGSGS (85 aa)) form a disordered region. Serine 13 carries the post-translational modification Phosphoserine. Positions 15-25 (PMEEEEEDDLD) are enriched in acidic residues. Low complexity predominate over residues 35–49 (SYNSSAGSESSSYLE). Acidic residues predominate over residues 50–60 (ESSEAENEDRE). Residue serine 67 is modified to Phosphoserine. Residues 73 to 82 (SSANNRSLDG) show a composition bias toward polar residues. Residues 81 to 116 (DGSGSEPAVCEMCGIVGTREAFFSKTKRFCSVSCSR) form an FCS-type zinc finger. Zn(2+) is bound by residues cysteine 90, cysteine 93, cysteine 110, and cysteine 114. MBT repeat units follow at residues 179–283 (FDWG…LVPP), 291–391 (TDWK…IKMS), 397–500 (MSHH…LTPP), and 508–604 (FAWE…LQPP). Serine 338 carries the phosphoserine modification. Lysine 405 is covalently cross-linked (Glycyl lysine isopeptide (Lys-Gly) (interchain with G-Cter in SUMO2)). The disordered stretch occupies residues 604 to 649 (PVSAEPNTPQKGKDTTKKKKKQFGKKRKRIPSAKTRPLRQGSKKPL). Residues 619 to 634 (TKKKKKQFGKKRKRIP) are compositionally biased toward basic residues. Glycyl lysine isopeptide (Lys-Gly) (interchain with G-Cter in SUMO2) cross-links involve residues lysine 647 and lysine 673. The interval 675–703 (EHQDISSLDRSPSPQLPLPIESIKQERNN) is disordered. Phosphoserine occurs at positions 681, 685, and 687. Residue lysine 698 forms a Glycyl lysine isopeptide (Lys-Gly) (interchain with G-Cter in SUMO1); alternate linkage. A Glycyl lysine isopeptide (Lys-Gly) (interchain with G-Cter in SUMO2); alternate cross-link involves residue lysine 698.

In terms of assembly, part of the E2F6.com-1 complex in G0 phase composed of E2F6, MGA, MAX, TFDP1, CBX3, BAT8, EUHMTASE1, RING1, RNF2, MBLR, BAT8 and YAF2. In terms of processing, phosphorylated. In terms of tissue distribution, ubiquitous.

Its subcellular location is the nucleus. Putative Polycomb group (PcG) protein. PcG proteins maintain the transcriptionally repressive state of genes, probably via a modification of chromatin, rendering it heritably changed in its expressibility. Its association with a chromatin-remodeling complex suggests that it may contribute to prevent expression of genes that trigger the cell into mitosis. Binds to monomethylated and dimethylated 'Lys-20' on histone H4. Binds histone H3 peptides that are monomethylated or dimethylated on 'Lys-4', 'Lys-9' or 'Lys-27'. This chain is Lethal(3)malignant brain tumor-like protein 2 (L3mbtl2), found in Mus musculus (Mouse).